We begin with the raw amino-acid sequence, 637 residues long: Extracellular metalloproteinase MEP (637 aa).

Residues 1 to 21 (MRSVDSLLLLGLTGLASQANA) form the signal peptide. Positions 22-246 (HPAKRQPNDS…VVGVVDYVAD (225 aa)) are excised as a propeptide. Residue N288 is glycosylated (N-linked (GlcNAc...) asparagine). H431 serves as a coordination point for Zn(2+). E432 is an active-site residue. H435 lines the Zn(2+) pocket.

Belongs to the peptidase M36 family. Zn(2+) serves as cofactor.

Its subcellular location is the secreted. In terms of biological role, secreted metalloproteinase that probably acts as a virulence factor. Cleaves Z.mays Endochitinase A (CHIA) between residues 'Gly-29' and 'Cys-30'. This is Extracellular metalloproteinase MEP (MEP) from Fusarium vanettenii (strain ATCC MYA-4622 / CBS 123669 / FGSC 9596 / NRRL 45880 / 77-13-4) (Fusarium solani subsp. pisi).